A 223-amino-acid chain; its full sequence is Probable GTP-binding protein EngB (223 aa).

One can recognise an EngB-type G domain in the interval 25–199; the sequence is TGVEIAFAGR…SRLLQDWFDE (175 aa). GTP-binding positions include 33–40, 60–64, 78–81, 145–148, and 178–180; these read GRSNAGKS, GRTQH, DLPG, TKAD, and FSS. Positions 40 and 62 each coordinate Mg(2+).

It belongs to the TRAFAC class TrmE-Era-EngA-EngB-Septin-like GTPase superfamily. EngB GTPase family. Mg(2+) is required as a cofactor.

In terms of biological role, necessary for normal cell division and for the maintenance of normal septation. The protein is Probable GTP-binding protein EngB of Nitrosomonas eutropha (strain DSM 101675 / C91 / Nm57).